We begin with the raw amino-acid sequence, 268 residues long: MTVPDPARPAASPSARPRVLVANDDGIFAPGIKALGLALSEWADVVVVAPDVEQSAVGHGITIRRPLRFKHTAAAGFGDIPAYRVDGTPADCVVLGVHLLGRPDLVVSGINIGPNLGEDLTHSGTVAAAIEGLTLGLPSIAFSQFANEAGEYDFGPSAAYASRLAREVCCRGLPPRVLLNVNFPRVSPRGVRVTEVGLHRWEDSVVTRQDPEGRDYHWVAGVSTAHDGHDEQTDYGAVQAGFISVSPVRLDLTARDLIGELTQALPPL.

A divalent metal cation-binding residues include Asp24, Asp25, Ser55, and Asn111.

Belongs to the SurE nucleotidase family. A divalent metal cation is required as a cofactor.

It localises to the cytoplasm. It carries out the reaction a ribonucleoside 5'-phosphate + H2O = a ribonucleoside + phosphate. In terms of biological role, nucleotidase that shows phosphatase activity on nucleoside 5'-monophosphates. The protein is 5'-nucleotidase SurE of Deinococcus radiodurans (strain ATCC 13939 / DSM 20539 / JCM 16871 / CCUG 27074 / LMG 4051 / NBRC 15346 / NCIMB 9279 / VKM B-1422 / R1).